Here is a 360-residue protein sequence, read N- to C-terminus: Phospho-N-acetylmuramoyl-pentapeptide-transferase (360 aa).

10 consecutive transmembrane segments (helical) span residues 25–45, 73–93, 97–117, 142–162, 168–188, 199–219, 236–256, 263–283, 288–308, and 338–358; these read RGIL…PWMI, TMGG…WADL, YVWV…VDDY, VGAA…TLII, ASIP…VGSS, GLAI…CYLS, AGEL…FLWF, VFMG…IAVI, IVLF…VIQV, and VIVR…ATLK.

The protein belongs to the glycosyltransferase 4 family. MraY subfamily. It depends on Mg(2+) as a cofactor.

It localises to the cell inner membrane. The enzyme catalyses UDP-N-acetyl-alpha-D-muramoyl-L-alanyl-gamma-D-glutamyl-meso-2,6-diaminopimeloyl-D-alanyl-D-alanine + di-trans,octa-cis-undecaprenyl phosphate = di-trans,octa-cis-undecaprenyl diphospho-N-acetyl-alpha-D-muramoyl-L-alanyl-D-glutamyl-meso-2,6-diaminopimeloyl-D-alanyl-D-alanine + UMP. It functions in the pathway cell wall biogenesis; peptidoglycan biosynthesis. Catalyzes the initial step of the lipid cycle reactions in the biosynthesis of the cell wall peptidoglycan: transfers peptidoglycan precursor phospho-MurNAc-pentapeptide from UDP-MurNAc-pentapeptide onto the lipid carrier undecaprenyl phosphate, yielding undecaprenyl-pyrophosphoryl-MurNAc-pentapeptide, known as lipid I. The sequence is that of Phospho-N-acetylmuramoyl-pentapeptide-transferase from Pseudomonas fluorescens (strain SBW25).